Here is a 500-residue protein sequence, read N- to C-terminus: L-arabinose isomerase (500 aa).

Residues glutamate 306, glutamate 333, histidine 350, and histidine 450 each contribute to the Mn(2+) site.

Belongs to the arabinose isomerase family. As to quaternary structure, homohexamer. The cofactor is Mn(2+).

It catalyses the reaction beta-L-arabinopyranose = L-ribulose. It participates in carbohydrate degradation; L-arabinose degradation via L-ribulose; D-xylulose 5-phosphate from L-arabinose (bacterial route): step 1/3. Its function is as follows. Catalyzes the conversion of L-arabinose to L-ribulose. The chain is L-arabinose isomerase (araA) from Escherichia coli (strain K12).